Consider the following 284-residue polypeptide: Exported repetitive protein (284 aa).

The N-terminal stretch at M1–A22 is a signal peptide. The Extracellular portion of the chain corresponds to S23 to N252. The tract at residues T80–G216 is disordered. Residues S86–T110 are compositionally biased toward low complexity. Tandem repeats lie at residues P92 to S96, P97 to S101, P102 to S106, P107 to D111, P112 to S116, P117 to P121, P144 to N148, P149 to S153, P154 to T158, P159 to S163, P164 to D168, and P169 to G173. The interval P92–P121 is 6 X 5 AA tandem repeats of P-[GA]-L-T-S. The interval P144–G173 is 6 X 5 AA approximate tandem repeats of P-[ATG]-[LG]-X-X. A compositionally biased stretch (polar residues) spans A145–T165. Low complexity predominate over residues G202–S212. The chain crosses the membrane as a helical span at residues G253 to V273. Topologically, residues P274 to A284 are cytoplasmic.

To M.leprae 28 kDa antigen.

The protein resides in the cell membrane. Surface-exposed protein required for multiplication and intracellular growth. The polypeptide is Exported repetitive protein (erp) (Mycobacterium bovis (strain ATCC BAA-935 / AF2122/97)).